Consider the following 141-residue polypeptide: Large ribosomal subunit protein uL11 (141 aa).

It belongs to the universal ribosomal protein uL11 family. Part of the ribosomal stalk of the 50S ribosomal subunit. Interacts with L10 and the large rRNA to form the base of the stalk. L10 forms an elongated spine to which L12 dimers bind in a sequential fashion forming a multimeric L10(L12)X complex. One or more lysine residues are methylated.

Its function is as follows. Forms part of the ribosomal stalk which helps the ribosome interact with GTP-bound translation factors. The polypeptide is Large ribosomal subunit protein uL11 (Lactiplantibacillus plantarum (strain ATCC BAA-793 / NCIMB 8826 / WCFS1) (Lactobacillus plantarum)).